Here is a 473-residue protein sequence, read N- to C-terminus: MSFSSLRRALVFLGACSSALASIGPVTELDIVNKVIAPDGVARDTVLAGGTFPGPLITGKKGDNFRINVVDKLVNQTMLTSTTIHWHGMFQHTTNWADGPAFVTQCPITTGDDFLYNFRVPDQTGTYWYHSHLALQYCDGLRGPLVIYDPHDPQAYLYDVDDESTVITLADWYHTPAPLLPPAATLINGLGRWPGNPTADLAVIEVQHGKRYRFRLVSTSCDPNYNFTIDGHTMTIIEADGQNTQPHQVDGLQIFAAQRYSFVLNANQAVNNYWIRANPNRANTTGFANGINSAILRYKGAPIKEPTTNQTTIRNFLWETDLHPLTDPRAPGLPFKGGVDHALNLNLTFNGSEFFINDAPFVPPTVPVLLQILNGTLDANDLLPPGSVYNLPPDSTIELSIPGGVTGGPHPFHLHGTDNPGPWFLHCHIDFHLQAGLAIVFAEDAQDTKLVNPVPEDWNKLCPTFDKAMNITV.

A signal peptide spans methionine 1–alanine 21. Plastocyanin-like domains follow at residues isoleucine 23–tyrosine 148 and valine 160–tyrosine 298. Residue asparagine 75 is glycosylated (N-linked (GlcNAc...) asparagine). Histidine 85, histidine 87, histidine 130, and histidine 132 together coordinate Cu cation. Cystine bridges form between cysteine 106–cysteine 462 and cysteine 138–cysteine 221. N-linked (GlcNAc...) asparagine glycosylation is found at asparagine 226, asparagine 283, asparagine 309, asparagine 346, asparagine 350, and asparagine 374. Positions threonine 365–aspartate 444 constitute a Plastocyanin-like 3 domain. Positions 410, 413, 415, 426, 427, 428, and 432 each coordinate Cu cation. Asparagine 470 is a glycosylation site (N-linked (GlcNAc...) asparagine).

This sequence belongs to the multicopper oxidase family. As to quaternary structure, homodimer. Cu cation is required as a cofactor.

The protein resides in the secreted. The enzyme catalyses 4 hydroquinone + O2 = 4 benzosemiquinone + 2 H2O. Its function is as follows. Lignin degradation and detoxification of lignin-derived products. The protein is Laccase-3 (LCC3) of Trametes villosa (White-rot fungus).